A 131-amino-acid polypeptide reads, in one-letter code: UPF0102 protein YraN (131 aa).

Over residues 1–19 the composition is skewed to polar residues; that stretch reads MATVPTRSGSPRQLTTKQT. The segment at 1–20 is disordered; sequence MATVPTRSGSPRQLTTKQTG.

The protein belongs to the UPF0102 family.

The polypeptide is UPF0102 protein YraN (Escherichia coli O17:K52:H18 (strain UMN026 / ExPEC)).